A 233-amino-acid polypeptide reads, in one-letter code: Histone H1-I (233 aa).

Disordered stretches follow at residues 1 to 55 and 115 to 233; these read MSDS…HPPV and TGAS…KKSK. The segment covering 17-29 has biased composition (low complexity); the sequence is KAATPAKSPAKSP. Residues 51 to 125 form the H15 domain; the sequence is THPPVSEMVV…GASGSFKMPP (75 aa). Composition is skewed to basic and acidic residues over residues 128–137 and 144–155; these read KKVDKPEAAP and PKREIEKKEKKV. Composition is skewed to basic residues over residues 172-186, 199-213, and 223-233; these read AAKK…KKAA, SPKK…KPTP, and AAAKKPAKKSK.

Belongs to the histone H1/H5 family.

The protein localises to the nucleus. Its subcellular location is the chromosome. Histones H1 are necessary for the condensation of nucleosome chains into higher-order structures. The polypeptide is Histone H1-I (Glyptotendipes salinus (Midge)).